A 156-amino-acid polypeptide reads, in one-letter code: Endogenous retrovirus group K member 104 Pro protein (156 aa).

The region spanning 21 to 96 (FEGLVDTEAD…IPLNLWGQDL (76 aa)) is the Peptidase A2 domain. Asp-26 is a catalytic residue. Positions 111-156 (YSPTSQKIMTKMGYIPGKGLGKNEDGIKVPVEAKINQKREGIGYPF) constitute a G-patch domain.

The protein belongs to the peptidase A2 family. HERV class-II K(HML-2) subfamily. In terms of assembly, active as a homodimer. Post-translationally, autoproteolytically processed at the N-terminus. Expected C-terminal autoprocessing not detected. The sequence shown is that of the processed Pro protein.

It catalyses the reaction Processing at the authentic HIV-1 PR recognition site and release of the mature p17 matrix and the p24 capsid protein, as a result of the cleavage of the -SQNY-|-PIVQ- cleavage site.. In terms of biological role, retroviral proteases have roles in the processing of the primary translation products and the maturation of the viral particle. Endogenous Pro proteins may have kept, lost or modified their original function during evolution. The protein is Endogenous retrovirus group K member 104 Pro protein (HERV-K104) of Homo sapiens (Human).